The primary structure comprises 418 residues: Beta-2 adrenergic receptor (418 aa).

Residues 1-34 (MGQPGNRSVFLLAPNGSHAPDQDVPQERDEAWVV) lie on the Extracellular side of the membrane. N-linked (GlcNAc...) asparagine glycans are attached at residues asparagine 6 and asparagine 15. Residues 35-58 (GMAIVMSLIVLAIVFGNVLVITAI) traverse the membrane as a helical segment. The Cytoplasmic portion of the chain corresponds to 59-71 (AKFERLQTVTNYF). The helical transmembrane segment at 72-95 (ITSLACADLVMGLAVVPFGASHIL) threads the bilayer. Residues 96-106 (MKMWTFGSFWC) lie on the Extracellular side of the membrane. 2 disulfide bridges follow: cysteine 106–cysteine 191 and cysteine 184–cysteine 190. The helical transmembrane segment at 107-129 (EFWISIDVLCVTASIETLCVIAV) threads the bilayer. Topologically, residues 130 to 150 (DRYLAITSPFKYQCLLTKNKA) are cytoplasmic. Tyrosine 141 is modified (phosphotyrosine). Residues 151 to 174 (RVVILMVWVVSGLISFLPIKMHWY) form a helical membrane-spanning segment. The Extracellular portion of the chain corresponds to 175–196 (QATHREALNCYAEEACCDFFTN). A helical transmembrane segment spans residues 197 to 220 (QPYAIASSIVSFYLPLVVMVFVYS). Topologically, residues 221–274 (RVFQVARRQLQKIDKSEGRFHAQNLSQAEQDGRSGPGHRRSSKFCLKEHKALKT) are cytoplasmic. At serine 246 the chain carries Phosphoserine. Serine 261 and serine 262 each carry phosphoserine; by PKA. Residue cysteine 265 is the site of S-palmitoyl cysteine attachment. A helical transmembrane segment spans residues 275–298 (LGIIMGTFTLCWLPFFIVNIVHGI). Residues 299 to 305 (HDNLIPK) are Extracellular-facing. A helical transmembrane segment spans residues 306-329 (EVYILLNWVGYVNSAFNPLIYCRS). Residues 330–418 (PDFRMAFQEL…RNCSTNDSML (89 aa)) are Cytoplasmic-facing. Residue cysteine 341 is the site of S-palmitoyl cysteine attachment. Serine 345 and serine 346 each carry phosphoserine; by PKA. Phosphoserine; by BARK occurs at positions 355 and 356. The tract at residues 381 to 418 (RLCEDAPGPEGCAHRQGTVPDDSTDSQGRNCSTNDSML) is disordered. 4-hydroxyproline is present on residues proline 387 and proline 400. A compositionally biased stretch (polar residues) spans 405–418 (DSQGRNCSTNDSML). Residues 415 to 418 (DSML) carry the PDZ-binding motif.

The protein belongs to the G-protein coupled receptor 1 family. Adrenergic receptor subfamily. ADRB2 sub-subfamily. Binds NHERF1 and GPRASP1. Interacts with ARRB1 and ARRB2. Interacts with SRC. Interacts with USP20 and USP33. Interacts with VHL; the interaction, which is increased on hydroxylation of ADRB2, ubiquitinates ADRB2 leading to its degradation. Interacts with EGLN3; the interaction hydroxylates ADRB2 facilitating VHL-E3 ligase-mediated ubiquitination. Interacts (via PDZ-binding motif) with SNX27 (via PDZ domain); the interaction is required when endocytosed to prevent degradation in lysosomes and promote recycling to the plasma membrane. Interacts with CNIH4. Interacts with ARRDC3. Interacts with NEDD4. Interacts with MARCHF2. In terms of processing, palmitoylated; may reduce accessibility of Ser-345 and Ser-346 by anchoring Cys-341 to the plasma membrane. Agonist stimulation promotes depalmitoylation and further allows Ser-345 and Ser-346 phosphorylation. Post-translationally, phosphorylated by PKA and BARK upon agonist stimulation, which mediates homologous desensitization of the receptor. PKA-mediated phosphorylation seems to facilitate phosphorylation by BARK. Phosphorylation of Tyr-141 is induced by insulin and leads to supersensitization of the receptor. In terms of processing, polyubiquitinated. Agonist-induced ubiquitination leads to sort internalized receptors to the lysosomes for degradation. Deubiquitination by USP20 and USP33, leads to ADRB2 recycling and resensitization after prolonged agonist stimulation. USP20 and USP33 are constitutively associated and are dissociated immediately after agonist stimulation. Ubiquitination by the VHL-E3 ligase complex is oxygen-dependent. Post-translationally, hydroxylation by EGLN3 occurs only under normoxia and increases the interaction with VHL and the subsequent ubiquitination and degradation of ADRB2. Palmitoylated. Mainly palmitoylated at Cys-341. Palmitoylation may reduce accessibility of phosphorylation sites by anchoring the receptor to the plasma membrane. Agonist stimulation promotes depalmitoylation and further allows Ser-345 and Ser-346 phosphorylation. Also undergoes transient, ligand-induced palmitoylation at Cys-265 probably by ZDHHC9, ZDHHC14 and ZDHHC18 within the Golgi. Palmitoylation at Cys-265 requires phosphorylation by PKA and receptor internalization and stabilizes the receptor. Could be depalmitoylated by LYPLA1 at the plasma membrane. As to expression, expressed in heart, liver, lung, skeletal muscle and subcutaneous adipose tissue.

It is found in the cell membrane. It localises to the early endosome. Its subcellular location is the golgi apparatus. Beta-adrenergic receptors mediate the catecholamine-induced activation of adenylate cyclase through the action of G proteins. The beta-2-adrenergic receptor binds epinephrine with an approximately 30-fold greater affinity than it does norepinephrine. The protein is Beta-2 adrenergic receptor (ADRB2) of Sus scrofa (Pig).